Consider the following 249-residue polypeptide: Eukaryotic translation initiation factor 3 subunit K (249 aa).

A PCI domain is found at 46–222 (FDCYANLALL…VKVPTNKENE (177 aa)).

This sequence belongs to the eIF-3 subunit K family. In terms of assembly, component of the eukaryotic translation initiation factor 3 (eIF-3) complex.

It is found in the cytoplasm. Functionally, component of the eukaryotic translation initiation factor 3 (eIF-3) complex, which is involved in protein synthesis of a specialized repertoire of mRNAs and, together with other initiation factors, stimulates binding of mRNA and methionyl-tRNAi to the 40S ribosome. The eIF-3 complex specifically targets and initiates translation of a subset of mRNAs involved in cell proliferation. In Neosartorya fischeri (strain ATCC 1020 / DSM 3700 / CBS 544.65 / FGSC A1164 / JCM 1740 / NRRL 181 / WB 181) (Aspergillus fischerianus), this protein is Eukaryotic translation initiation factor 3 subunit K.